Consider the following 293-residue polypeptide: 4-hydroxybenzoate octaprenyltransferase (293 aa).

The next 8 membrane-spanning stretches (helical) occupy residues 26-48 (PIGTLLLLYPTLWALFAAAGGMP), 98-118 (TEAKILFVLLLCIAFVLDLLL), 122-142 (TFLLSFVAVALAIIYPFMKRF), 145-165 (LPQVVLGMAFGWAIPMAYGAV), 167-187 (ESLPLECWLLFFANIFWTVAY), 218-238 (IIALLQFITLVLLVIFGWISQ), 241-261 (WGYFVVLGLSASLFSHQCWLT), and 272-292 (AFLNNHYFGLGVFFAILVGIY).

This sequence belongs to the UbiA prenyltransferase family. Requires Mg(2+) as cofactor.

It is found in the cell inner membrane. It carries out the reaction all-trans-octaprenyl diphosphate + 4-hydroxybenzoate = 4-hydroxy-3-(all-trans-octaprenyl)benzoate + diphosphate. It functions in the pathway cofactor biosynthesis; ubiquinone biosynthesis. Its function is as follows. Catalyzes the prenylation of para-hydroxybenzoate (PHB) with an all-trans polyprenyl group. Mediates the second step in the final reaction sequence of ubiquinone-8 (UQ-8) biosynthesis, which is the condensation of the polyisoprenoid side chain with PHB, generating the first membrane-bound Q intermediate 3-octaprenyl-4-hydroxybenzoate. The polypeptide is 4-hydroxybenzoate octaprenyltransferase (Actinobacillus pleuropneumoniae serotype 3 (strain JL03)).